Reading from the N-terminus, the 638-residue chain is DNA gyrase subunit B (638 aa).

The 115-residue stretch at 423-537 folds into the Toprim domain; it reads CEVYIVEGDS…KGHVYLAMPP (115 aa). The Mg(2+) site is built by E429, D502, and D504.

Belongs to the type II topoisomerase GyrB family. As to quaternary structure, heterotetramer, composed of two GyrA and two GyrB chains. In the heterotetramer, GyrA contains the active site tyrosine that forms a transient covalent intermediate with DNA, while GyrB binds cofactors and catalyzes ATP hydrolysis. Mg(2+) is required as a cofactor. Mn(2+) serves as cofactor. It depends on Ca(2+) as a cofactor.

The protein localises to the cytoplasm. The enzyme catalyses ATP-dependent breakage, passage and rejoining of double-stranded DNA.. Functionally, a type II topoisomerase that negatively supercoils closed circular double-stranded (ds) DNA in an ATP-dependent manner to modulate DNA topology and maintain chromosomes in an underwound state. Negative supercoiling favors strand separation, and DNA replication, transcription, recombination and repair, all of which involve strand separation. Also able to catalyze the interconversion of other topological isomers of dsDNA rings, including catenanes and knotted rings. Type II topoisomerases break and join 2 DNA strands simultaneously in an ATP-dependent manner. The chain is DNA gyrase subunit B from Treponema denticola (strain ATCC 35405 / DSM 14222 / CIP 103919 / JCM 8153 / KCTC 15104).